The following is a 541-amino-acid chain: Sorting nexin-27 (541 aa).

The interval 1–42 (MADEDGEGIHPSAPHRNGGGGGGGGSGLHCAGNGGGGGGGPR) is disordered. Residues 17–41 (NGGGGGGGGSGLHCAGNGGGGGGGP) show a composition bias toward gly residues. The PDZ domain maps to 43-136 (VVRIVKSESG…ELILTVLSVP (94 aa)). Residues Ser51 and Ser62 each carry the phosphoserine modification. In terms of domain architecture, PX spans 161 to 269 (QAVPISVPRY…EFLSESDENY (109 aa)). One can recognise a Ras-associating domain in the interval 273–362 (SDVELRVALP…TCLTIRKWLF (90 aa)). The segment at 273–362 (SDVELRVALP…TCLTIRKWLF (90 aa)) is FERM-like region F1. Positions 373 to 421 (NDLAVTYFFHQAVDDVKKGYIKAEEKSYQLQKLYEQRKMVMYLNMLRTC) are FERM-like region F2. The FERM-like region F3 stretch occupies residues 425 to 525 (NEIIFPHCAC…RVFCELKWRK (101 aa)).

It belongs to the sorting nexin family. Core component of the SNX27-retromer, a multiprotein complex composed of SNX27, the WASH complex and the retromer complex. Interacts (via PDZ domain) with a number of target transmembrane proteins (via PDZ-binding motif): ABCC4, ADRB2, ARHGEF7, GRIA1, GRIA2, GRIN1, GRIN2A GRIN2C, KCNJ6, KCNJ9 and SLC2A1/GLUT1. Interacts (via the FERM-like regions) with the WASH complex. Interacts with SNX1. Interacts with CYTIP. Isoform 1 and isoform 2 directly interact with DGKZ. Isoform 1 and isoform 2 interact with HT4R isoform 5-HTA(A). Interacts with MCC. Interacts (via PDZ domains) with SLC9A3; directs SLC9A3 membrane insertion from early endosomes to the plasma membrane. Widely expressed. Expressed in cells of hematopoietic origin (at protein level).

It localises to the early endosome membrane. It is found in the cytoplasm. The protein resides in the cytosol. Functionally, involved in the retrograde transport from endosome to plasma membrane, a trafficking pathway that promotes the recycling of internalized transmembrane proteins. Following internalization, endocytosed transmembrane proteins are delivered to early endosomes and recycled to the plasma membrane instead of being degraded in lysosomes. SNX27 specifically binds and directs sorting of a subset of transmembrane proteins containing a PDZ-binding motif at the C-terminus: following interaction with target transmembrane proteins, associates with the retromer complex, preventing entry into the lysosomal pathway, and promotes retromer-tubule based plasma membrane recycling. SNX27 also binds with the WASH complex. Interacts with membranes containing phosphatidylinositol-3-phosphate (PtdIns(3P)). May participate in establishment of natural killer cell polarity. Recruits CYTIP to early endosomes. The protein is Sorting nexin-27 (SNX27) of Homo sapiens (Human).